The sequence spans 280 residues: Ataxin-3 homolog (280 aa).

The 181-residue stretch at 7–187 (GGMLYHEVQE…QECPMSSSSE (181 aa)) folds into the Josephin domain. Cys20 functions as the Nucleophile in the catalytic mechanism. Catalysis depends on His126, which acts as the Proton acceptor. The active site involves Asp141. Polar residues-rich tracts occupy residues 183 to 194 (SSSSEASNSFGQ) and 221 to 232 (DNVNQQRRNQAL). Positions 183-240 (SSSSEASNSFGQWLSPEDAERIRKNTSSGSSARNKRSNDNVNQQRRNQALSREEVQAF) are disordered. Residues 243–262 (MEDDDLKAAIAASLLDASAA) enclose the UIM domain.

The protein resides in the nucleus. It catalyses the reaction Thiol-dependent hydrolysis of ester, thioester, amide, peptide and isopeptide bonds formed by the C-terminal Gly of ubiquitin (a 76-residue protein attached to proteins as an intracellular targeting signal).. Its function is as follows. Interacts with key regulators of transcription and represses transcription. Acts as a histone-binding protein that regulates transcription. Acts as a deubiquitinating enzyme. This chain is Ataxin-3 homolog, found in Arabidopsis thaliana (Mouse-ear cress).